The primary structure comprises 498 residues: Ammonium transporter 1 member 3 (498 aa).

11 consecutive transmembrane segments (helical) span residues 41 to 61 (LLFS…LCAG), 76 to 96 (VLDA…FAFG), 122 to 142 (FFLF…GSIA), 150 to 170 (YLIY…HWFW), 194 to 214 (FAGS…GAFI), 238 to 258 (LVVL…PGSF), 277 to 299 (AVGR…TLYG), 307 to 327 (WNVT…TAGC), 329 to 349 (VVDP…LIGC), 362 to 382 (LEAT…TALF), and 414 to 434 (IVQI…LFYV). The interval 473-498 (RAKSAAETARVEPRKSPEQAAAGQFV) is disordered.

Belongs to the ammonia transporter channel (TC 1.A.11.2) family. Expressed in roots.

The protein localises to the membrane. Its function is as follows. Ammonium transporter probably involved in ammonium uptake from the soil. The sequence is that of Ammonium transporter 1 member 3 (AMT1-3) from Oryza sativa subsp. japonica (Rice).